Reading from the N-terminus, the 360-residue chain is uncharacterized protein (360 aa).

4 to 22 (KVLHIGAGGFGERWCDTFL) lines the NAD(+) pocket.

Functionally, could be a NAD-dependent oxidoreductase. This is an uncharacterized protein from Sinorhizobium fredii (strain NBRC 101917 / NGR234).